The chain runs to 292 residues: MESRVLFSSQFNFPVNSPFKTRETSIAPLTPSRNVLSFSFRSPAERCAMRIVPLVKAASSTPQIVAEVDGSSHEPRRKKLAVFVSGGGSNFRKIHEGCSDGSVNGDVVLLVTNKKDCGGAEYARSNGIPVLVFPKAKREPSDGLSPSELVDVLRKYGVDFVLLAGYLKLIPVELVQAFPKRILNIHPALLPAFGGKGLYGIKVHKAVLESGARYSGPTIHFVNEEYDTGRILAQSAVRVIANDTPEELAKRVLHEEHKLYVEVVGAICEERIKWREDGVPLIQNKQNPDEYY.

Residues 1-65 (MESRVLFSSQ…KAASSTPQIV (65 aa)) constitute a chloroplast transit peptide. N(1)-(5-phospho-beta-D-ribosyl)glycinamide is bound at residue 88–90 (GSN). (6R)-10-formyltetrahydrofolate is bound by residues 167 to 170 (LKLI) and N184. Residue H186 is the Proton donor of the active site. Residue D227 coordinates (6R)-10-formyltetrahydrofolate. E256 serves as a coordination point for N(1)-(5-phospho-beta-D-ribosyl)glycinamide.

The protein belongs to the GART family.

Its subcellular location is the plastid. The protein resides in the chloroplast. It carries out the reaction N(1)-(5-phospho-beta-D-ribosyl)glycinamide + (6R)-10-formyltetrahydrofolate = N(2)-formyl-N(1)-(5-phospho-beta-D-ribosyl)glycinamide + (6S)-5,6,7,8-tetrahydrofolate + H(+). Its pathway is purine metabolism; IMP biosynthesis via de novo pathway; N(2)-formyl-N(1)-(5-phospho-D-ribosyl)glycinamide from N(1)-(5-phospho-D-ribosyl)glycinamide (10-formyl THF route): step 1/1. The chain is Phosphoribosylglycinamide formyltransferase, chloroplastic (PUR3) from Arabidopsis thaliana (Mouse-ear cress).